The sequence spans 69 residues: Metallothionein-like protein CRS5 (69 aa).

Belongs to the metallothionein superfamily. Type 13 family.

In terms of biological role, critical role in copper (specific) homeostasis and detoxification. May protect by directly chelating and sequestering copper ions. The protein is Metallothionein-like protein CRS5 (CRS5) of Saccharomyces cerevisiae (strain RM11-1a) (Baker's yeast).